A 186-amino-acid chain; its full sequence is Ribosome-recycling factor (186 aa).

Belongs to the RRF family.

The protein localises to the cytoplasm. Its function is as follows. Responsible for the release of ribosomes from messenger RNA at the termination of protein biosynthesis. May increase the efficiency of translation by recycling ribosomes from one round of translation to another. This is Ribosome-recycling factor from Bordetella avium (strain 197N).